A 333-amino-acid chain; its full sequence is Ribonucleoside-diphosphate reductase small chain B (333 aa).

The Fe cation site is built by D76, E107, and H110. Y114 is a catalytic residue. Residues E169, E203, and H206 each contribute to the Fe cation site.

The protein belongs to the ribonucleoside diphosphate reductase small chain family. Heterodimer of a large and a small chain. Fe cation serves as cofactor. Expressed in roots, rosette leaves, stems and flowers.

Its subcellular location is the cytoplasm. The enzyme catalyses a 2'-deoxyribonucleoside 5'-diphosphate + [thioredoxin]-disulfide + H2O = a ribonucleoside 5'-diphosphate + [thioredoxin]-dithiol. Functionally, provides the precursors necessary for DNA synthesis. Catalyzes the biosynthesis of deoxyribonucleotides from the corresponding ribonucleotides. In Arabidopsis thaliana (Mouse-ear cress), this protein is Ribonucleoside-diphosphate reductase small chain B (RNR2B).